The chain runs to 319 residues: Fructokinase (319 aa).

The protein belongs to the carbohydrate kinase PfkB family. Expressed in swelling stolons and, at higher levels, in developing tubers. Low levels found in leaves and stems from tuberizing plants.

It catalyses the reaction D-fructose + ATP = D-fructose 6-phosphate + ADP + H(+). The protein operates within glycan biosynthesis; starch biosynthesis. In terms of biological role, may play an important role in maintaining the flux of carbon towards starch formation. This Solanum tuberosum (Potato) protein is Fructokinase.